The sequence spans 150 residues: Protein A151R (150 aa).

The protein belongs to the asfivirus A151R family. As to quaternary structure, monomer. Homodimer. Interacts with protein B119L. Interacts with membrane protein E248R. The cofactor is Zn(2+).

In terms of biological role, may participate in a redox cascade for the formation of disulfide bonds in viral proteins. This chain is Protein A151R, found in African swine fever virus (isolate Pig/Kenya/KEN-50/1950) (ASFV).